The sequence spans 181 residues: tRNA-splicing endonuclease (181 aa).

Residues Tyr-118, His-126, and Lys-157 contribute to the active site.

Belongs to the tRNA-intron endonuclease family. Archaeal short subfamily. Homotetramer; although the tetramer contains four active sites, only two participate in the cleavage. Therefore, it should be considered as a dimer of dimers.

It catalyses the reaction pretRNA = a 3'-half-tRNA molecule with a 5'-OH end + a 5'-half-tRNA molecule with a 2',3'-cyclic phosphate end + an intron with a 2',3'-cyclic phosphate and a 5'-hydroxyl terminus.. Endonuclease that removes tRNA introns. Cleaves pre-tRNA at the 5'- and 3'-splice sites to release the intron. The products are an intron and two tRNA half-molecules bearing 2',3' cyclic phosphate and 5'-OH termini. Recognizes a pseudosymmetric substrate in which 2 bulged loops of 3 bases are separated by a stem of 4 bp. The protein is tRNA-splicing endonuclease of Hyperthermus butylicus (strain DSM 5456 / JCM 9403 / PLM1-5).